The sequence spans 374 residues: Flagellar P-ring protein (374 aa).

The signal sequence occupies residues 1–29; it reads MPGVGISRIVRIAVAALVALAPLMTPAHA.

It belongs to the FlgI family. In terms of assembly, the basal body constitutes a major portion of the flagellar organelle and consists of four rings (L,P,S, and M) mounted on a central rod.

It localises to the periplasm. The protein resides in the bacterial flagellum basal body. In terms of biological role, assembles around the rod to form the L-ring and probably protects the motor/basal body from shearing forces during rotation. In Nitrobacter hamburgensis (strain DSM 10229 / NCIMB 13809 / X14), this protein is Flagellar P-ring protein.